The following is a 30-amino-acid chain: Cyclotide cter-F (30 aa).

A cross-link (cyclopeptide (Gly-Asp)) is located at residues 1–30 (GIPCGESCVFIPCISSVVGCSCKSKVCYLD). 3 cysteine pairs are disulfide-bonded: cysteine 4-cysteine 20, cysteine 8-cysteine 22, and cysteine 13-cysteine 27.

Contains 3 disulfide bonds. Post-translationally, this is a cyclic peptide.

Probably participates in a plant defense mechanism. The sequence is that of Cyclotide cter-F from Clitoria ternatea (Butterfly pea).